Here is a 369-residue protein sequence, read N- to C-terminus: Putative transport protein YueF (369 aa).

8 helical membrane passes run 13–33 (ILFV…FQPF), 34–54 (IVFI…YFIF), 73–93 (LIYL…GPII), 159–179 (AVFG…FILF), 213–233 (DTLA…GTAC), 234–254 (FIGY…VMAI), 271–291 (VIVG…VVVI), and 316–336 (IILL…ILAV).

Belongs to the autoinducer-2 exporter (AI-2E) (TC 2.A.86) family.

The protein resides in the cell membrane. The chain is Putative transport protein YueF (yueF) from Bacillus subtilis (strain 168).